The following is a 175-amino-acid chain: Vesicle-associated membrane protein-associated protein SCS22 (175 aa).

The 125-residue stretch at 1–125 (MRIVPEKLVF…DDIVFKKIKI (125 aa)) folds into the MSP domain. The Cytoplasmic segment spans residues 1–154 (MRIVPEKLVF…RAPSAGNGQS (154 aa)). The interval 133–152 (RKPSGNHDAESARAPSAGNG) is disordered. A helical; Anchor for type IV membrane protein membrane pass occupies residues 155–175 (LSSRALLIITVIALLVGWIYY).

It belongs to the VAMP-associated protein (VAP) (TC 9.B.17) family.

The protein localises to the membrane. In terms of biological role, targets proteins containing a FFAT motif to membranes. Involved in regulation of phospholipid metabolism. The polypeptide is Vesicle-associated membrane protein-associated protein SCS22 (SCS22) (Saccharomyces cerevisiae (strain ATCC 204508 / S288c) (Baker's yeast)).